A 284-amino-acid chain; its full sequence is Phosphatidylserine decarboxylase proenzyme (284 aa).

Active-site charge relay system; for autoendoproteolytic cleavage activity residues include D88, H145, and S248. The active-site Schiff-base intermediate with substrate; via pyruvic acid; for decarboxylase activity is S248. S248 carries the pyruvic acid (Ser); by autocatalysis modification.

It belongs to the phosphatidylserine decarboxylase family. PSD-B subfamily. Prokaryotic type I sub-subfamily. In terms of assembly, heterodimer of a large membrane-associated beta subunit and a small pyruvoyl-containing alpha subunit. It depends on pyruvate as a cofactor. Post-translationally, is synthesized initially as an inactive proenzyme. Formation of the active enzyme involves a self-maturation process in which the active site pyruvoyl group is generated from an internal serine residue via an autocatalytic post-translational modification. Two non-identical subunits are generated from the proenzyme in this reaction, and the pyruvate is formed at the N-terminus of the alpha chain, which is derived from the carboxyl end of the proenzyme. The autoendoproteolytic cleavage occurs by a canonical serine protease mechanism, in which the side chain hydroxyl group of the serine supplies its oxygen atom to form the C-terminus of the beta chain, while the remainder of the serine residue undergoes an oxidative deamination to produce ammonia and the pyruvoyl prosthetic group on the alpha chain. During this reaction, the Ser that is part of the protease active site of the proenzyme becomes the pyruvoyl prosthetic group, which constitutes an essential element of the active site of the mature decarboxylase.

Its subcellular location is the cell membrane. The catalysed reaction is a 1,2-diacyl-sn-glycero-3-phospho-L-serine + H(+) = a 1,2-diacyl-sn-glycero-3-phosphoethanolamine + CO2. The protein operates within phospholipid metabolism; phosphatidylethanolamine biosynthesis; phosphatidylethanolamine from CDP-diacylglycerol: step 2/2. Catalyzes the formation of phosphatidylethanolamine (PtdEtn) from phosphatidylserine (PtdSer). The sequence is that of Phosphatidylserine decarboxylase proenzyme from Delftia acidovorans (strain DSM 14801 / SPH-1).